Reading from the N-terminus, the 653-residue chain is Putative clathrin assembly protein At2g25430 (653 aa).

Positions 23-159 (VASNMAPDLE…ELALFERKSG (137 aa)) constitute an ENTH domain. Positions 160–171 (VSVNSGGNSSHH) are enriched in low complexity. The tract at residues 160–240 (VSVNSGGNSS…GGGGGGRDEK (81 aa)) is disordered. Positions 172 to 186 (SNNDDRYGRGRDDFR) are enriched in basic and acidic residues. A compositionally biased stretch (gly residues) spans 197–214 (NGGGGGSDFRGDNNGYGG). S221 is subject to Phosphoserine. A Phosphothreonine modification is found at T244. Basic and acidic residues predominate over residues 376 to 389 (RAKRGKSPERKEIE). A disordered region spans residues 376 to 431 (RAKRGKSPERKEIEAPPPVVEEEEPEPDMNEIKALPPPENYTPPPPPEPEPQPEKP). A compositionally biased stretch (acidic residues) spans 395-404 (VEEEEPEPDM). Residues 410–425 (LPPPENYTPPPPPEPE) show a composition bias toward pro residues.

The protein localises to the membrane. It localises to the clathrin-coated pit. It is found in the golgi apparatus. Its subcellular location is the cytoplasmic vesicle. The protein resides in the clathrin-coated vesicle. This chain is Putative clathrin assembly protein At2g25430, found in Arabidopsis thaliana (Mouse-ear cress).